Reading from the N-terminus, the 200-residue chain is Small ribosomal subunit protein uS4c (200 aa).

Residues Met-91–Asn-154 enclose the S4 RNA-binding domain.

Belongs to the universal ribosomal protein uS4 family. As to quaternary structure, part of the 30S ribosomal subunit. Contacts protein S5. The interaction surface between S4 and S5 is involved in control of translational fidelity.

The protein resides in the plastid. The protein localises to the chloroplast. In terms of biological role, one of the primary rRNA binding proteins, it binds directly to 16S rRNA where it nucleates assembly of the body of the 30S subunit. Functionally, with S5 and S12 plays an important role in translational accuracy. In Oltmannsiellopsis viridis (Marine flagellate), this protein is Small ribosomal subunit protein uS4c (rps4).